Here is a 591-residue protein sequence, read N- to C-terminus: Aspartate--tRNA(Asp/Asn) ligase (591 aa).

Glu-176 serves as a coordination point for L-aspartate. The tract at residues 200–203 (QLFK) is aspartate. Residue Arg-222 participates in L-aspartate binding. ATP contacts are provided by residues 222-224 (RDE) and Gln-231. Residue His-450 coordinates L-aspartate. An ATP-binding site is contributed by Glu-484. L-aspartate is bound at residue Arg-491. 536–539 (GLDR) contributes to the ATP binding site.

Belongs to the class-II aminoacyl-tRNA synthetase family. Type 1 subfamily. As to quaternary structure, homodimer.

It localises to the cytoplasm. It catalyses the reaction tRNA(Asx) + L-aspartate + ATP = L-aspartyl-tRNA(Asx) + AMP + diphosphate. Functionally, aspartyl-tRNA synthetase with relaxed tRNA specificity since it is able to aspartylate not only its cognate tRNA(Asp) but also tRNA(Asn). Reaction proceeds in two steps: L-aspartate is first activated by ATP to form Asp-AMP and then transferred to the acceptor end of tRNA(Asp/Asn). In Bacillus thuringiensis (strain Al Hakam), this protein is Aspartate--tRNA(Asp/Asn) ligase.